We begin with the raw amino-acid sequence, 193 residues long: Ion-translocating oxidoreductase complex subunit A (193 aa).

6 helical membrane-spanning segments follow: residues 5-25 (LLLF…FLGL), 39-59 (MGMG…AWLI), 63-83 (ILIP…VIAV), 102-122 (LLGI…VALL), 134-154 (ALYG…FAAI), and 171-191 (AIAL…SGLV).

Belongs to the NqrDE/RnfAE family. As to quaternary structure, the complex is composed of six subunits: RsxA, RsxB, RsxC, RsxD, RsxE and RsxG.

It is found in the cell inner membrane. Functionally, part of a membrane-bound complex that couples electron transfer with translocation of ions across the membrane. Required to maintain the reduced state of SoxR. This is Ion-translocating oxidoreductase complex subunit A from Shigella boydii serotype 18 (strain CDC 3083-94 / BS512).